Here is a 552-residue protein sequence, read N- to C-terminus: Hydroxylamine reductase (552 aa).

Residues cysteine 5, cysteine 8, cysteine 20, and cysteine 27 each contribute to the [2Fe-2S] cluster site. The hybrid [4Fe-2O-2S] cluster site is built by histidine 251, glutamate 275, cysteine 319, cysteine 407, cysteine 435, cysteine 460, glutamate 494, and lysine 496. Cysteine 407 carries the cysteine persulfide modification.

Belongs to the HCP family. [2Fe-2S] cluster serves as cofactor. Requires hybrid [4Fe-2O-2S] cluster as cofactor.

Its subcellular location is the cytoplasm. The enzyme catalyses A + NH4(+) + H2O = hydroxylamine + AH2 + H(+). Catalyzes the reduction of hydroxylamine to form NH(3) and H(2)O. This chain is Hydroxylamine reductase, found in Escherichia coli (strain UTI89 / UPEC).